A 146-amino-acid chain; its full sequence is Large ribosomal subunit protein uL15 (146 aa).

The interval 1–56 is disordered; the sequence is MRLHDLRPVPGSRQKPTRKGQGIGSGLGKTAGRGQKGQKARSGGGVRPGFEGGQMP. 2 stretches are compositionally biased toward gly residues: residues 21-35 and 42-52; these read QGIG…GRGQ and SGGGVRPGFEG.

It belongs to the universal ribosomal protein uL15 family. Part of the 50S ribosomal subunit.

Functionally, binds to the 23S rRNA. The protein is Large ribosomal subunit protein uL15 of Carboxydothermus hydrogenoformans (strain ATCC BAA-161 / DSM 6008 / Z-2901).